The primary structure comprises 202 residues: MENLIIYAFIYLLSSIPFGLILAKFFAKTDIKKEGSKSIGATNVLRVVKEKNPKLAKKLAIATIILDFAKAAIPLLTLKFLHYDQALLWSVAVLAILGHCFSIYLLFEGGKGIATGAGAMIVLLPLEVLTAFIVWVVIGKIFKISSLASLAALLAFVVSSFIFNYDLEIHTHAPVFIIAFIIVYKHLPNIKRLIFKEECKVI.

The next 5 membrane-spanning stretches (helical) occupy residues 3–23 (NLIIYAFIYLLSSIPFGLILA), 87–107 (LLWSVAVLAILGHCFSIYLLF), 118–138 (GAMIVLLPLEVLTAFIVWVVI), 144–164 (ISSLASLAALLAFVVSSFIFN), and 167–187 (LEIHTHAPVFIIAFIIVYKHL).

Belongs to the PlsY family. As to quaternary structure, probably interacts with PlsX.

The protein localises to the cell inner membrane. It catalyses the reaction an acyl phosphate + sn-glycerol 3-phosphate = a 1-acyl-sn-glycero-3-phosphate + phosphate. It functions in the pathway lipid metabolism; phospholipid metabolism. In terms of biological role, catalyzes the transfer of an acyl group from acyl-phosphate (acyl-PO(4)) to glycerol-3-phosphate (G3P) to form lysophosphatidic acid (LPA). This enzyme utilizes acyl-phosphate as fatty acyl donor, but not acyl-CoA or acyl-ACP. The chain is Glycerol-3-phosphate acyltransferase from Campylobacter jejuni (strain RM1221).